We begin with the raw amino-acid sequence, 92 residues long: UPF0250 protein VP0718 (92 aa).

It belongs to the UPF0250 family.

The chain is UPF0250 protein VP0718 from Vibrio parahaemolyticus serotype O3:K6 (strain RIMD 2210633).